A 601-amino-acid polypeptide reads, in one-letter code: Proline--tRNA ligase (601 aa).

Belongs to the class-II aminoacyl-tRNA synthetase family. ProS type 1 subfamily. As to quaternary structure, homodimer.

The protein resides in the cytoplasm. It catalyses the reaction tRNA(Pro) + L-proline + ATP = L-prolyl-tRNA(Pro) + AMP + diphosphate. In terms of biological role, catalyzes the attachment of proline to tRNA(Pro) in a two-step reaction: proline is first activated by ATP to form Pro-AMP and then transferred to the acceptor end of tRNA(Pro). As ProRS can inadvertently accommodate and process non-cognate amino acids such as alanine and cysteine, to avoid such errors it has two additional distinct editing activities against alanine. One activity is designated as 'pretransfer' editing and involves the tRNA(Pro)-independent hydrolysis of activated Ala-AMP. The other activity is designated 'posttransfer' editing and involves deacylation of mischarged Ala-tRNA(Pro). The misacylated Cys-tRNA(Pro) is not edited by ProRS. This is Proline--tRNA ligase from Trichodesmium erythraeum (strain IMS101).